Here is a 405-residue protein sequence, read N- to C-terminus: Secreted aspartic protease 8 (405 aa).

An N-terminal signal peptide occupies residues methionine 1–glycine 23. Residues leucine 24–arginine 75 constitute a propeptide, activation peptide. The disordered stretch occupies residues threonine 52–valine 78. Positions histidine 58–glutamine 70 are enriched in low complexity. The Peptidase A1 domain maps to tyrosine 89–alanine 392. The active site involves aspartate 107. Aspartate 107–glycine 109 is a pepstatin A binding site. A disulfide bridge links cysteine 122 with cysteine 134. Pepstatin A is bound by residues glutamate 160–aspartate 161 and aspartate 292–threonine 296. Aspartate 292 is an active-site residue. Cysteines 327 and 358 form a disulfide.

The protein belongs to the peptidase A1 family. Monomer.

The protein resides in the secreted. The catalysed reaction is Preferential cleavage at the carboxyl of hydrophobic amino acids, but fails to cleave 15-Leu-|-Tyr-16, 16-Tyr-|-Leu-17 and 24-Phe-|-Phe-25 of insulin B chain. Activates trypsinogen, and degrades keratin.. Functionally, secreted aspartic peptidases (SAPs) are a group of ten acidic hydrolases considered as key virulence factors. These enzymes supply the fungus with nutrient amino acids as well as are able to degrade the selected host's proteins involved in the immune defense. Moreover, acts toward human hemoglobin though limited proteolysis to generate a variety of antimicrobial hemocidins, enabling to compete with the other microorganisms of the same physiological niche using the microbicidal peptides generated from the host protein. Plays a key role in defense against host by cleaving histatin-5 (Hst 5), a peptide from human saliva that carries out fungicidal activity. The cleavage rate decreases in an order of SAP2 &gt; SAP9 &gt; SAP3 &gt; SAP7 &gt; SAP4 &gt; SAP1 &gt; SAP8. The hydrolysis of Hst 5 by SAP8 causes production of the DSHAKRHHGY, HHSHRGY and FHEKHHSHRGY peptides. The sequence is that of Secreted aspartic protease 8 from Candida albicans (strain SC5314 / ATCC MYA-2876) (Yeast).